The sequence spans 182 residues: Orotate phosphoribosyltransferase (182 aa).

Residues Arg-96, Lys-97, Lys-100, His-102, and 122-130 each bind 5-phospho-alpha-D-ribose 1-diphosphate; that span reads EDTSTTGGS. Orotate-binding residues include Thr-126 and Arg-154.

It belongs to the purine/pyrimidine phosphoribosyltransferase family. PyrE subfamily. In terms of assembly, homodimer. Mg(2+) is required as a cofactor.

It carries out the reaction orotidine 5'-phosphate + diphosphate = orotate + 5-phospho-alpha-D-ribose 1-diphosphate. It functions in the pathway pyrimidine metabolism; UMP biosynthesis via de novo pathway; UMP from orotate: step 1/2. Functionally, catalyzes the transfer of a ribosyl phosphate group from 5-phosphoribose 1-diphosphate to orotate, leading to the formation of orotidine monophosphate (OMP). This Streptomyces coelicolor (strain ATCC BAA-471 / A3(2) / M145) protein is Orotate phosphoribosyltransferase.